Reading from the N-terminus, the 304-residue chain is Hairy/enhancer-of-split related with YRPW motif protein 1 (304 aa).

The tract at residues 1-52 (MKRAHPEYSSSESELDETIEVEKESADENGNLSSALGSMSPTTSSQILARKR) is disordered. The span at 28 to 47 (ENGNLSSALGSMSPTTSSQI) shows a compositional bias: polar residues. The interval 48–117 (LARKRRRGII…GGKGYFDAHA (70 aa)) is transcriptional repression and interaction with NCOR1 and SIN3A. Residues 49–104 (ARKRRRGIIEKRRRDRINNSLSELRRLVPSAFEKQGSAKLEKAEILQMTVDHLKML) form the bHLH domain. Residues 122–158 (YRSLGFRECLAEVARYLSIIEGLDASDPLRVRLVSHL) enclose the Orange domain. The segment covering 197 to 211 (SQSTHGNTGTSASPT) has biased composition (polar residues). The segment at 197-234 (SQSTHGNTGTSASPTESHHQGRLATAHPEASALRAPPS) is disordered. The YRPW motif motif lies at 294-297 (YRPW).

It belongs to the HEY family. As to quaternary structure, self-associates. Interacts with HES1 and HEYL. Interacts with HDAC1, NCOR1 and SIN3A. Interacts with GATA4 and GATA6. Interacts with CCDC89/BOIP.

Its subcellular location is the nucleus. Functionally, transcriptional repressor which binds preferentially to the canonical E box sequence 5'-CACGTG-3'. Downstream effector of Notch signaling required for cardiovascular development. Specifically required for the Notch-induced endocardial epithelial to mesenchymal transition, which is itself criticial for cardiac valve and septum development. May be required in conjunction with HEY2 to specify arterial cell fate or identity. Promotes maintenance of neuronal precursor cells and glial versus neuronal fate specification. Represses transcription by the cardiac transcriptional activators GATA4 and GATA6 and by the neuronal bHLH factors ASCL1/MASH1 and NEUROD4/MATH3. The chain is Hairy/enhancer-of-split related with YRPW motif protein 1 (HEY1) from Bos taurus (Bovine).